The following is a 480-amino-acid chain: MDSREFRRRGKEMVDYIADYLDGIEGRPVYPDVEPGYLRALIPTTAPQEPETYEDIIRDIEKIIMPGVTHWHSPYFFAYFPTASSYPAMLADMLCGAIGCIGFSWAASPACTELETVMMDWLGKMLELPEAFLAGRAGEGGGVIQGSASEATLVALLAARTKMIRQLQAASPELTQAALMEKLVAYTSDQAHSSVERAGLIGGVKIKAIPSDGNYSMRAAALREALERDKAAGLIPFFVVVTLGTTSCCSFDNLLEVGPICNQEGVWLHIDAAYAGSAFICPEFRYLLNGVEFADSFNFNPHKWLLVNFDCSAMWVKKRTDLTEAFNMDPVYLRHSHQDSGLITDYRHWQIPLGRRFRSLKMWFVFRMYGVKGLQAYIRKHVKLSHEFESLVRQDPRFEICTEVILGLVCFRLKGSNQLNETLLQRINSAKKIHLVPCRLRDKFVLRFAVCSRTVESAHVQLAWEHIRDLASSVLRAEKE.

Met-1 bears the N-acetylmethionine mark. Tandem repeats lie at residues 58–115 (RDIE…TELE) and 118–178 (MMDW…TQAA). The tract at residues 58–178 (RDIEKIIMPG…AASPELTQAA (121 aa)) is 2 X approximate tandem repeats. Thr-82 is a substrate binding site. Residues Ala-148 and Ser-149 each contribute to the pyridoxal 5'-phosphate site. Residue His-192 coordinates substrate. Residues Thr-246 and Asn-300 each contribute to the pyridoxal 5'-phosphate site. An N6-(pyridoxal phosphate)lysine modification is found at Lys-303.

The protein belongs to the group II decarboxylase family. In terms of assembly, homodimer. Pyridoxal 5'-phosphate serves as cofactor.

It catalyses the reaction L-dopa + H(+) = dopamine + CO2. The catalysed reaction is 5-hydroxy-L-tryptophan + H(+) = serotonin + CO2. It participates in catecholamine biosynthesis; dopamine biosynthesis; dopamine from L-tyrosine: step 2/2. In terms of biological role, catalyzes the decarboxylation of L-3,4-dihydroxyphenylalanine (DOPA) to dopamine and L-5-hydroxytryptophan to serotonin. The polypeptide is Aromatic-L-amino-acid decarboxylase (Rattus norvegicus (Rat)).